Consider the following 62-residue polypeptide: Large ribosomal subunit protein bL32 (62 aa).

Basic residues predominate over residues 1 to 16 (MAVQKNRKTRSKRGMR). The segment at 1–62 (MAVQKNRKTR…VISQGDSDDE (62 aa)) is disordered. Positions 53–62 (VISQGDSDDE) are enriched in polar residues.

Belongs to the bacterial ribosomal protein bL32 family.

The sequence is that of Large ribosomal subunit protein bL32 from Alcanivorax borkumensis (strain ATCC 700651 / DSM 11573 / NCIMB 13689 / SK2).